A 507-amino-acid chain; its full sequence is Probable cytosol aminopeptidase (507 aa).

Mn(2+) contacts are provided by Lys-275 and Asp-280. Residue Lys-287 is part of the active site. Positions 298, 357, and 359 each coordinate Mn(2+). Arg-361 is a catalytic residue.

This sequence belongs to the peptidase M17 family. Mn(2+) is required as a cofactor.

The protein resides in the cytoplasm. The catalysed reaction is Release of an N-terminal amino acid, Xaa-|-Yaa-, in which Xaa is preferably Leu, but may be other amino acids including Pro although not Arg or Lys, and Yaa may be Pro. Amino acid amides and methyl esters are also readily hydrolyzed, but rates on arylamides are exceedingly low.. It carries out the reaction Release of an N-terminal amino acid, preferentially leucine, but not glutamic or aspartic acids.. In terms of biological role, presumably involved in the processing and regular turnover of intracellular proteins. Catalyzes the removal of unsubstituted N-terminal amino acids from various peptides. In Rhodopirellula baltica (strain DSM 10527 / NCIMB 13988 / SH1), this protein is Probable cytosol aminopeptidase.